The chain runs to 175 residues: Interleukin-10 (175 aa).

Residues 1-18 form the signal peptide; that stretch reads MPSSALLYCLIFLAGVAA. 2 disulfide bridges follow: C26–C122 and C76–C128. N130 carries N-linked (GlcNAc...) asparagine glycosylation.

Belongs to the IL-10 family. Homodimer. Interacts with IL10RA and IL10RB.

Its subcellular location is the secreted. Major immune regulatory cytokine that acts on many cells of the immune system where it has profound anti-inflammatory functions, limiting excessive tissue disruption caused by inflammation. Mechanistically, IL10 binds to its heterotetrameric receptor comprising IL10RA and IL10RB leading to JAK1 and STAT2-mediated phosphorylation of STAT3. In turn, STAT3 translocates to the nucleus where it drives expression of anti-inflammatory mediators. Targets antigen-presenting cells (APCs) such as macrophages and monocytes and inhibits their release of pro-inflammatory cytokines including granulocyte-macrophage colony-stimulating factor /GM-CSF, granulocyte colony-stimulating factor/G-CSF, IL-1 alpha, IL-1 beta, IL-6, IL-8 and TNF-alpha. Also interferes with antigen presentation by reducing the expression of MHC-class II and co-stimulatory molecules, thereby inhibiting their ability to induce T cell activation. In addition, controls the inflammatory response of macrophages by reprogramming essential metabolic pathways including mTOR signaling. This chain is Interleukin-10 (IL10), found in Sus scrofa (Pig).